A 365-amino-acid polypeptide reads, in one-letter code: SWR1 complex subunit 2 (365 aa).

Disordered stretches follow at residues 43 to 83 (ALKE…NEKE) and 95 to 147 (PGKT…EGEK). Over residues 48–74 (EHDDEYEAEREVADEFDSDFNDDEPEP) the composition is skewed to acidic residues. The span at 99-108 (ASKKKKKKTK) shows a compositional bias: basic residues. The span at 118–132 (GDEKPGEELGNKEQE) shows a compositional bias: basic and acidic residues. 2 coiled-coil regions span residues 123–150 (GEEL…KVIR) and 184–225 (GEEK…KAIV). The span at 133–144 (EKEENEAQEDME) shows a compositional bias: acidic residues. The segment at 333–365 (RTKIPKSNKSFSLRSSARFLSSESEEESEEDSD) is disordered. The segment covering 342–354 (SFSLRSSARFLSS) has biased composition (low complexity). Over residues 355-365 (ESEEESEEDSD) the composition is skewed to acidic residues.

It belongs to the VPS72/YL1 family. In terms of assembly, component of the SWR1 chromatin-remodeling complex composed of at least ARP6/ESD1/SUF3, PIE1, SWC6, SWC2 and H2AZs (HTA8, HTA9, HTA11). Interacts directly with SWC6 and H2AZs, but not with ARP6.

Component of the SWR1 complex which mediates the ATP-dependent exchange of histone H2A for the H2A variant H2A.F/Z leading to transcriptional regulation of selected genes (e.g. FLC) by chromatin remodeling. The polypeptide is SWR1 complex subunit 2 (SWC2) (Arabidopsis thaliana (Mouse-ear cress)).